Here is a 613-residue protein sequence, read N- to C-terminus: Acetylcholinesterase (613 aa).

The N-terminal stretch at 1-30 (MRPPWCPLHTPSLTPPLLLLLFLIGGGAEA) is a signal peptide. The N-linked (GlcNAc...) asparagine glycan is linked to N91. A disulfide bond links C99 and C126. S233 (acyl-ester intermediate) is an active-site residue. C287 and C302 are oxidised to a cystine. N295 is a glycosylation site (N-linked (GlcNAc...) asparagine). Catalysis depends on E364, which acts as the Charge relay system. Residue N380 is glycosylated (N-linked (GlcNAc...) asparagine). An intrachain disulfide couples C439 to C559. H477 serves as the catalytic Charge relay system. A glycan (N-linked (GlcNAc...) asparagine) is linked at N494.

Belongs to the type-B carboxylesterase/lipase family. Interacts with PRIMA1. The interaction with PRIMA1 is required to anchor it to the basal lamina of cells and organize into tetramers. Isoform H generates GPI-anchored dimers; disulfide linked. Isoform T generates multiple structures, ranging from monomers and dimers to collagen-tailed and hydrophobic-tailed forms, in which catalytic tetramers are associated with anchoring proteins that attach them to the basal lamina or to cell membranes. In the collagen-tailed forms, isoform T subunits are associated with a specific collagen, COLQ, which triggers the formation of isoform T tetramers, from monomers and dimers.

The protein resides in the synapse. It is found in the secreted. The protein localises to the cell membrane. It carries out the reaction acetylcholine + H2O = choline + acetate + H(+). Its function is as follows. Terminates signal transduction at the neuromuscular junction by rapid hydrolysis of the acetylcholine released into the synaptic cleft. The sequence is that of Acetylcholinesterase (ACHE) from Bos taurus (Bovine).